The sequence spans 150 residues: MKSIEVHTDGSCLGNPGPGGWAALLRYNGREKELAGGEAVSTNNRMELMAAIMALETLTEPCQIVLHTDSQYVRQGITEWMPGWVRRNWKTAGCDPVKNRELWERLHAATQRHRIDWRWVKGHNGDPDNERVDVLARNQAIAQRGGLATS.

The region spanning 1–141 (MKSIEVHTDG…VDVLARNQAI (141 aa)) is the RNase H type-1 domain. Mg(2+) is bound by residues D9, E47, D69, and D133.

This sequence belongs to the RNase H family. In terms of assembly, monomer. Mg(2+) is required as a cofactor.

The protein localises to the cytoplasm. It catalyses the reaction Endonucleolytic cleavage to 5'-phosphomonoester.. Its function is as follows. Endonuclease that specifically degrades the RNA of RNA-DNA hybrids. The protein is Ribonuclease H of Xanthomonas axonopodis pv. citri (strain 306).